Consider the following 35-residue polypeptide: Toxin Ado1 (35 aa).

3 disulfides stabilise this stretch: cysteine 5-cysteine 20, cysteine 12-cysteine 25, and cysteine 19-cysteine 32.

The protein localises to the secreted. In terms of biological role, binds reversibly and blocks P/Q-type voltage-gated calcium channels (Cav). This Agriosphodrus dohrni (Japanese assassin-bug) protein is Toxin Ado1.